A 1752-amino-acid chain; its full sequence is Gag-Pol polyprotein (1752 aa).

Residue G2 is the site of N-myristoyl glycine; by host attachment. A coiled-coil region spans residues 154-185 (AAQQQVLLLQREQQREQREKDIKKRDEKKKKL). Residues 168 to 178 (REQREKDIKKR) are compositionally biased toward basic and acidic residues. The segment at 168–222 (REQREKDIKKRDEKKKKLLPDTTQKVEQTDIGEASSSDASAQKPISTDNNPDLKV) is disordered. Residues 201-217 (ASSSDASAQKPISTDNN) are compositionally biased toward polar residues. The segment at 501 to 518 (NTCFFCKQPGHWKADCPN) adopts a CCHC-type zinc-finger fold. The 77-residue stretch at 618 to 694 (IPMLVDTGAC…QTFHILGRDT (77 aa)) folds into the Peptidase A2 domain. Residue D623 is the Protease; shared with dimeric partner of the active site. The region spanning 793 to 977 (ENQGILIKCH…QEVVYLGQLL (185 aa)) is the Reverse transcriptase domain. Mg(2+)-binding residues include D861, D928, D929, D1231, E1269, D1290, D1360, D1493, and D1550. One can recognise an RNase H type-1 domain in the interval 1222 to 1368 (PDPDMTLFSD…ADEAAKNAVF (147 aa)). The Integrase catalytic domain occupies 1482–1638 (LPSRPFAHLQ…SPHEIVMGRP (157 aa)).

Homohexamer. Further associates as homomultimer. The virus core is composed of a lattice formed from hexagonal rings, each containing six capsid monomers. The protease is a homodimer, whose active site consists of two apposed aspartic acid residues. The reverse transcriptase is a monomer. Mg(2+) serves as cofactor. Post-translationally, specific enzymatic cleavages by the viral protease yield mature proteins. The protease is released by autocatalytic cleavage. The polyprotein is cleaved during and after budding, this process is termed maturation.

The protein localises to the host cell membrane. It is found in the virion. It catalyses the reaction DNA(n) + a 2'-deoxyribonucleoside 5'-triphosphate = DNA(n+1) + diphosphate. It carries out the reaction Endonucleolytic cleavage to 5'-phosphomonoester.. Targets Gag and gag-pol polyproteins to the plasma membrane via a multipartite membrane binding signal, that includes its myristoylated N-terminus. Also mediates nuclear localization of the pre-integration complex. Functionally, capsid protein p25 forms the spherical core of the virion that encapsulates the genomic RNA-nucleocapsid complex. Its function is as follows. Involved in the packaging and encapsidation of two copies of the genome. Binds with high affinity to conserved UCUG elements within the packaging signal, located near the 5'-end of the genome. This binding is dependent on genome dimerization. In terms of biological role, mediates proteolytic cleavages of Gag and Gag-Pol polyproteins during or shortly after the release of the virion from the plasma membrane. Cleavages take place as an ordered, step-wise cascade to yield mature proteins. This process is called maturation. Displays maximal activity during the budding process just prior to particle release from the cell. Is a multifunctional enzyme that converts the viral dimeric RNA genome into dsDNA in the cytoplasm, shortly after virus entry into the cell. This enzyme displays a DNA polymerase activity that can copy either DNA or RNA templates, and a ribonuclease H (RNase H) activity that cleaves the RNA strand of RNA-DNA heteroduplexes in a partially processive 3' to 5' endonucleasic mode. Conversion of viral genomic RNA into dsDNA requires many steps. A tRNA binds to the primer-binding site (PBS) situated at the 5' end of the viral RNA. RT uses the 3' end of the tRNA primer to perform a short round of RNA-dependent minus-strand DNA synthesis. The reading proceeds through the U5 region and ends after the repeated (R) region which is present at both ends of viral RNA. The portion of the RNA-DNA heteroduplex is digested by the RNase H, resulting in a ssDNA product attached to the tRNA primer. This ssDNA/tRNA hybridizes with the identical R region situated at the 3' end of viral RNA. This template exchange, known as minus-strand DNA strong stop transfer, can be either intra- or intermolecular. RT uses the 3' end of this newly synthesized short ssDNA to perform the RNA-dependent minus-strand DNA synthesis of the whole template. RNase H digests the RNA template except for a polypurine tract (PPT) situated at the 5' end of the genome. It is not clear if both polymerase and RNase H activities are simultaneous. RNase H probably can proceed both in a polymerase-dependent (RNA cut into small fragments by the same RT performing DNA synthesis) and a polymerase-independent mode (cleavage of remaining RNA fragments by free RTs). Secondly, RT performs DNA-directed plus-strand DNA synthesis using the PPT that has not been removed by RNase H as primers. PPT and tRNA primers are then removed by RNase H. The 3' and 5' ssDNA PBS regions hybridize to form a circular dsDNA intermediate. Strand displacement synthesis by RT to the PBS and PPT ends produces a blunt ended, linear dsDNA copy of the viral genome that includes long terminal repeats (LTRs) at both ends. Functionally, catalyzes viral DNA integration into the host chromosome, by performing a series of DNA cutting and joining reactions. This enzyme activity takes place after virion entry into a cell and reverse transcription of the RNA genome in dsDNA. The first step in the integration process is 3' processing. This step requires a complex comprising the viral genome, matrix protein and integrase. This complex is called the pre-integration complex (PIC). The integrase protein removes 2 nucleotides from each 3' end of the viral DNA, leaving recessed CA OH's at the 3' ends. In the second step that requires cell division, the PIC enters cell nucleus. In the third step, termed strand transfer, the integrase protein joins the previously processed 3' ends to the 5' ends of strands of target cellular DNA at the site of integration. The last step is viral DNA integration into host chromosome. Its function is as follows. Plays a role in budding and is processed by the viral protease during virion maturation outside the cell. This is Gag-Pol polyprotein (gag-pol) from Walleye dermal sarcoma virus (WDSV).